The sequence spans 157 residues: Large ribosomal subunit protein uL22 (157 aa).

Belongs to the universal ribosomal protein uL22 family. As to quaternary structure, part of the 50S ribosomal subunit.

In terms of biological role, this protein binds specifically to 23S rRNA. It makes multiple contacts with different domains of the 23S rRNA in the assembled 50S subunit and ribosome. The globular domain of the protein is located near the polypeptide exit tunnel on the outside of the subunit, while an extended beta-hairpin is found that lines the wall of the exit tunnel in the center of the 70S ribosome. This is Large ribosomal subunit protein uL22 from Methanocorpusculum labreanum (strain ATCC 43576 / DSM 4855 / Z).